A 425-amino-acid polypeptide reads, in one-letter code: Phosphomethylpyrimidine synthase (425 aa).

Residues methionine 94, tyrosine 123, histidine 162, 184 to 186 (SRG), 225 to 228 (NGMR), and glutamate 264 each bind substrate. Histidine 268 is a binding site for Zn(2+). Tyrosine 291 contributes to the substrate binding site. A Zn(2+)-binding site is contributed by histidine 332. [4Fe-4S] cluster-binding residues include cysteine 407, cysteine 410, and cysteine 414.

It belongs to the ThiC family. [4Fe-4S] cluster is required as a cofactor.

The enzyme catalyses 5-amino-1-(5-phospho-beta-D-ribosyl)imidazole + S-adenosyl-L-methionine = 4-amino-2-methyl-5-(phosphooxymethyl)pyrimidine + CO + 5'-deoxyadenosine + formate + L-methionine + 3 H(+). It functions in the pathway cofactor biosynthesis; thiamine diphosphate biosynthesis. Functionally, catalyzes the synthesis of the hydroxymethylpyrimidine phosphate (HMP-P) moiety of thiamine from aminoimidazole ribotide (AIR) in a radical S-adenosyl-L-methionine (SAM)-dependent reaction. In Methanocorpusculum labreanum (strain ATCC 43576 / DSM 4855 / Z), this protein is Phosphomethylpyrimidine synthase.